Consider the following 483-residue polypeptide: Isocitrate dehydrogenase [NADP] (483 aa).

Thr74 serves as a coordination point for NADP(+). D-threo-isocitrate contacts are provided by Ser83, Asn85, Arg89, Arg99, and Arg121. Asp232 provides a ligand contact to Mg(2+). NADP(+) is bound by residues 264–270 and Asn277; that span reads HGSAPDI.

The protein belongs to the isocitrate and isopropylmalate dehydrogenases family. In terms of assembly, homodimer. Mg(2+) is required as a cofactor. Mn(2+) serves as cofactor.

It catalyses the reaction D-threo-isocitrate + NADP(+) = 2-oxoglutarate + CO2 + NADPH. Its function is as follows. Catalyzes the oxidative decarboxylation of isocitrate to 2-oxoglutarate and carbon dioxide with the concomitant reduction of NADP(+). This is Isocitrate dehydrogenase [NADP] (icd) from Rickettsia bellii (strain RML369-C).